Here is a 138-residue protein sequence, read N- to C-terminus: ATP synthase epsilon chain (138 aa).

This sequence belongs to the ATPase epsilon chain family. F-type ATPases have 2 components, CF(1) - the catalytic core - and CF(0) - the membrane proton channel. CF(1) has five subunits: alpha(3), beta(3), gamma(1), delta(1), epsilon(1). CF(0) has three main subunits: a, b and c.

Its subcellular location is the cellular thylakoid membrane. Produces ATP from ADP in the presence of a proton gradient across the membrane. This is ATP synthase epsilon chain from Microcystis aeruginosa (strain NIES-843 / IAM M-2473).